Reading from the N-terminus, the 121-residue chain is Large ribosomal subunit protein uL14c (121 aa).

This sequence belongs to the universal ribosomal protein uL14 family. As to quaternary structure, part of the 50S ribosomal subunit.

The protein localises to the plastid. Its subcellular location is the chloroplast. Functionally, binds to 23S rRNA. The chain is Large ribosomal subunit protein uL14c from Phaeodactylum tricornutum (strain CCAP 1055/1).